The primary structure comprises 126 residues: Protein ApaG (126 aa).

The ApaG domain occupies Ser-2 to His-126.

This chain is Protein ApaG, found in Pseudomonas aeruginosa (strain LESB58).